The following is a 411-amino-acid chain: Histidine--tRNA ligase (411 aa).

Belongs to the class-II aminoacyl-tRNA synthetase family. As to quaternary structure, homodimer.

The protein localises to the cytoplasm. The catalysed reaction is tRNA(His) + L-histidine + ATP = L-histidyl-tRNA(His) + AMP + diphosphate + H(+). The protein is Histidine--tRNA ligase of Dictyoglomus turgidum (strain DSM 6724 / Z-1310).